A 151-amino-acid polypeptide reads, in one-letter code: Small ribosomal subunit protein uS15 (151 aa).

It belongs to the universal ribosomal protein uS15 family.

In Pisum sativum (Garden pea), this protein is Small ribosomal subunit protein uS15 (RPS13).